Here is a 474-residue protein sequence, read N- to C-terminus: Catalase (474 aa).

Catalysis depends on residues His52 and Asn124. Tyr334 lines the heme pocket.

This sequence belongs to the catalase family. Heme is required as a cofactor.

It carries out the reaction 2 H2O2 = O2 + 2 H2O. Functionally, decomposes hydrogen peroxide into water and oxygen; serves to protect cells from the toxic effects of hydrogen peroxide. This Campylobacter jejuni subsp. jejuni serotype O:2 (strain ATCC 700819 / NCTC 11168) protein is Catalase (katA).